The sequence spans 205 residues: ATP-dependent Clp protease proteolytic subunit (205 aa).

Ser108 serves as the catalytic Nucleophile. Residue His133 is part of the active site.

It belongs to the peptidase S14 family. As to quaternary structure, fourteen ClpP subunits assemble into 2 heptameric rings which stack back to back to give a disk-like structure with a central cavity, resembling the structure of eukaryotic proteasomes.

Its subcellular location is the cytoplasm. It carries out the reaction Hydrolysis of proteins to small peptides in the presence of ATP and magnesium. alpha-casein is the usual test substrate. In the absence of ATP, only oligopeptides shorter than five residues are hydrolyzed (such as succinyl-Leu-Tyr-|-NHMec, and Leu-Tyr-Leu-|-Tyr-Trp, in which cleavage of the -Tyr-|-Leu- and -Tyr-|-Trp bonds also occurs).. Functionally, cleaves peptides in various proteins in a process that requires ATP hydrolysis. Has a chymotrypsin-like activity. Plays a major role in the degradation of misfolded proteins. In Alcanivorax borkumensis (strain ATCC 700651 / DSM 11573 / NCIMB 13689 / SK2), this protein is ATP-dependent Clp protease proteolytic subunit.